The sequence spans 9439 residues: Extracellular matrix-binding protein ebh (9439 aa).

29 consecutive FIVAR domains span residues 1815–1871 (ARRR…VNSA), 1901–1957 (AKEQ…INDA), 1985–2041 (AYDT…VRDA), 2071–2127 (AKKR…ITSE), 2155–2211 (AYNK…VTQA), 2241–2297 (AKNR…ISSE), 2325–2381 (AYNK…VEDA), 2411–2467 (AKEK…ITEN), 2488–2551 (DTTS…VNNA), 2581–2638 (ARNR…STEI), 2665–2720 (AKNQ…IRTN), 2748–2804 (AKTA…VSDE), 2832–2888 (AYNQ…VNNA), 2918–2974 (AKEQ…ISNA), 3002–3058 (AYNQ…VTAA), 3088–3144 (AKQQ…ITNE), 3172–3228 (AYNQ…VAQA), 3258–3314 (AKNQ…ISDE), 3335–3398 (DTTE…VNNA), 3428–3484 (ARLN…ITTE), 3512–3567 (AKTA…IKTN), 3595–3650 (IKRQ…VKES), 3678–3733 (AKNR…IRQN), 3802–3860 (SMTA…IDQK), 3928–3983 (AMTQ…LDPA), 4056–4114 (AMQA…VNQK), 4182–4240 (SMGT…VDNA), 4308–4365 (AMHT…INQK), and 4433–4491 (VMEQ…IEQA). The span at 2495-2507 (EVRKLSRRGDTNN) shows a compositional bias: basic and acidic residues. A disordered region spans residues 2495-2514 (EVRKLSRRGDTNNKKPSSVS). Residues 2925–2938 (AVDQVPSTEGMTQQ) show a composition bias toward polar residues. The interval 2925–2951 (AVDQVPSTEGMTQQTKDDYNSKQQAAQ) is disordered. The disordered stretch occupies residues 4522–4542 (LSGLTNEQKPKENQAVNGAQT). The region spanning 4559 to 4617 (SMQTLRDLVNNQNAIHSTSNYFNEDSTQKNTYDNAIDNGSTYITGQHNPELNKSTIDQT) is the FIVAR 30 domain. The disordered stretch occupies residues 4648-4671 (LGYLNDPQKSGEESLVNGSNTRSE). 14 consecutive FIVAR domains span residues 4685–4743 (AMKQ…IEQK), 4811–4869 (AMQA…IEQA), 4937–4995 (AMSN…IEQA), 5063–5115 (AMEA…VLDK), 5189–5246 (AMLG…INQL), 5314–5372 (LMGA…VTTA), 5440–5498 (AMGE…IDQA), 5566–5624 (AMKK…ITNA), 5692–5750 (AMKQ…IADT), 5818–5875 (DMST…LQDL), 5943–6000 (AMKA…IKQA), 6068–6126 (KMEE…INRT), 6194–6252 (AMQQ…IQAI), and 6320–6378 (EMGT…IADA). Residues 5699–5712 (QVNQDDQISNSSPF) are compositionally biased toward polar residues. The interval 5699-5719 (QVNQDDQISNSSPFINEDSDK) is disordered. The tract at residues 6413–6434 (NNSQRQSEHDEINSAPSRTEVS) is disordered. FIVAR domains follow at residues 6446-6504 (AMRQ…IEDA), 6572-6630 (AMKA…INRA), 6698-6755 (SMNQ…IDQA), 6823-6877 (TMKA…ANDE), 6949-7007 (AMKK…INTI), 7075-7133 (SMNT…VERA), 7201-7259 (DMKK…IENA), 7327-7384 (AMKH…IKQL), 7452-7510 (AMEN…IEHA), 7578-7636 (AMKA…INSI), 7704-7762 (AMET…VDIV), 7830-7888 (AMKS…VRQA), 7956-8010 (VMGK…TKQA), 8078-8137 (IMGE…IDTF), 8205-8264 (AMKS…IQGL), 8332-8391 (AMKD…VLGL), 8459-8518 (KMKL…IQHL), and 8587-8643 (AMQG…ANII). The helical transmembrane segment at 9306–9324 (TVGVITLTGLLSSFWLVLA) threads the bilayer. 3 stretches are compositionally biased toward basic and acidic residues: residues 9363 to 9375 (DKEE…DKHS), 9386 to 9395 (EKQLSEEDIH), and 9404 to 9413 (QNSDNKDTKQ). The tract at residues 9363–9439 (DKEEQIQNDD…VVKTKKRSKK (77 aa)) is disordered. Positions 9414–9439 (KKVTSKKKKTPQSTKKVVKTKKRSKK) are enriched in basic residues.

Its subcellular location is the cell membrane. The polypeptide is Extracellular matrix-binding protein ebh (ebh) (Staphylococcus epidermidis (strain ATCC 35984 / DSM 28319 / BCRC 17069 / CCUG 31568 / BM 3577 / RP62A)).